A 723-amino-acid polypeptide reads, in one-letter code: Probable C-mannosyltransferase DPY19L4 (723 aa).

The interval 1 to 33 (MAEEEGPPVELRQRKKPKSSENKESAKEEKISD) is disordered. Ala2 carries the N-acetylalanine modification. Over residues 18-32 (KSSENKESAKEEKIS) the composition is skewed to basic and acidic residues. 12 consecutive transmembrane segments (helical) span residues 52-72 (IFIG…YLSA), 161-178 (VYFY…YVTA), 184-202 (WLMS…WFVI), 222-240 (LPYF…KSNL), 260-280 (MMMW…LFLL), 292-310 (YEVY…LLQF), 316-337 (LVSP…QLNV), 349-370 (VINF…KMFV), 421-441 (LLPF…QVIF), 466-486 (IIYH…IEGL), 489-509 (IWIP…ELWM), and 522-542 (PILL…LSLW).

Belongs to the dpy-19 family. As to expression, widely expressed.

The protein resides in the membrane. Functionally, probable C-mannosyltransferase that mediates C-mannosylation of tryptophan residues on target proteins. In Homo sapiens (Human), this protein is Probable C-mannosyltransferase DPY19L4 (DPY19L4).